The primary structure comprises 205 residues: Large ribosomal subunit protein uL13 (205 aa).

This sequence belongs to the universal ribosomal protein uL13 family.

This Lupinus luteus (European yellow lupine) protein is Large ribosomal subunit protein uL13 (RPL13A).